The sequence spans 490 residues: GTPase Der (490 aa).

EngA-type G domains lie at 3 to 166 and 203 to 376; these read PVVA…MEDL and IKLA…DSST. GTP contacts are provided by residues 9-16, 56-60, 118-121, 209-216, 256-260, and 321-324; these read GRPNVGKS, DTGGI, NKTD, DTAGV, and NKWD. A KH-like domain is found at 377–461; the sequence is RRVGTSMLTR…PIRIQFKEGE (85 aa).

Belongs to the TRAFAC class TrmE-Era-EngA-EngB-Septin-like GTPase superfamily. EngA (Der) GTPase family. Associates with the 50S ribosomal subunit.

In terms of biological role, GTPase that plays an essential role in the late steps of ribosome biogenesis. In Escherichia coli O81 (strain ED1a), this protein is GTPase Der.